The primary structure comprises 254 residues: Isoprenyl transferase (254 aa).

Asp-34 is an active-site residue. Asp-34 is a Mg(2+) binding site. Substrate contacts are provided by residues 35–38 (GNGR), Trp-39, Arg-47, His-51, and 79–81 (STE). Catalysis depends on Asn-82, which acts as the Proton acceptor. Substrate is bound by residues Trp-83, Arg-85, Arg-202, and 208–210 (RIS). Position 221 (Glu-221) interacts with Mg(2+).

This sequence belongs to the UPP synthase family. As to quaternary structure, homodimer. It depends on Mg(2+) as a cofactor.

Its function is as follows. Catalyzes the condensation of isopentenyl diphosphate (IPP) with allylic pyrophosphates generating different type of terpenoids. The chain is Isoprenyl transferase from Staphylococcus saprophyticus subsp. saprophyticus (strain ATCC 15305 / DSM 20229 / NCIMB 8711 / NCTC 7292 / S-41).